Consider the following 29-residue polypeptide: Protein YldA (29 aa).

The helical transmembrane segment at 5 to 25 threads the bilayer; the sequence is FYILIGFLIMAAIIVMAVLYL.

It is found in the cell inner membrane. The polypeptide is Protein YldA (Escherichia coli (strain K12)).